Reading from the N-terminus, the 587-residue chain is Aspartate--tRNA ligase (587 aa).

E174 is a binding site for L-aspartate. Residues 198 to 201 (QITK) are aspartate. R220 is an L-aspartate binding site. Residues 220–222 (RDE) and Q229 contribute to the ATP site. H443 lines the L-aspartate pocket. E477 contributes to the ATP binding site. Residue R484 coordinates L-aspartate. 529–532 (GLDR) is a binding site for ATP.

The protein belongs to the class-II aminoacyl-tRNA synthetase family. Type 1 subfamily. In terms of assembly, homodimer.

The protein resides in the cytoplasm. The enzyme catalyses tRNA(Asp) + L-aspartate + ATP = L-aspartyl-tRNA(Asp) + AMP + diphosphate. In terms of biological role, catalyzes the attachment of L-aspartate to tRNA(Asp) in a two-step reaction: L-aspartate is first activated by ATP to form Asp-AMP and then transferred to the acceptor end of tRNA(Asp). The protein is Aspartate--tRNA ligase of Streptococcus pneumoniae (strain 70585).